Consider the following 55-residue polypeptide: MAKPTTVKIRLVSTADTGFFYVTKKNPRNTTEKMTFRKYDPVVRKHVEFKEAKIK.

The protein belongs to the bacterial ribosomal protein bL33 family.

The chain is Large ribosomal subunit protein bL33 from Novosphingobium aromaticivorans (strain ATCC 700278 / DSM 12444 / CCUG 56034 / CIP 105152 / NBRC 16084 / F199).